A 752-amino-acid polypeptide reads, in one-letter code: Endo-1,4-beta-xylanase 3 (752 aa).

Residues 1–22 are disordered; that stretch reads MEKNTNTNHTSDDNNDKNHTNE. Over residues 10–22 the composition is skewed to basic and acidic residues; sequence TSDDNNDKNHTNE. CBM-cenC domains lie at 26 to 163 and 197 to 344; these read KIIL…EGPP and NIVE…VQGP. The region spanning 397–692 is the GH10 domain; that stretch reads FPYIVKVKQT…NEAGKRFLEV (296 aa). The active-site Proton donor is the E526. The Nucleophile role is filled by E627.

This sequence belongs to the glycosyl hydrolase 10 (cellulase F) family. In terms of tissue distribution, confined to immature xylems.

The catalysed reaction is Endohydrolysis of (1-&gt;4)-beta-D-xylosidic linkages in xylans.. The protein operates within glycan degradation; xylan degradation. Its function is as follows. Binds to and hydrolyzes insoluble and soluble xylan substrates. In Arabidopsis thaliana (Mouse-ear cress), this protein is Endo-1,4-beta-xylanase 3.